A 133-amino-acid polypeptide reads, in one-letter code: MRHGHGLRKLNRTSEHRLAMLRNMMNSLLQHEAIKTTLPKAKELRRVVEPMITLAKTPTLANKRLAFDRLRDRDMVVKLFAELGPRYQTRPGGYTRILKMGFRVGDNAPMALVELVDRPDVSEEIKDDAAAAK.

The protein belongs to the bacterial ribosomal protein bL17 family. In terms of assembly, part of the 50S ribosomal subunit. Contacts protein L32.

The protein is Large ribosomal subunit protein bL17 of Polaromonas naphthalenivorans (strain CJ2).